The following is a 188-amino-acid chain: Large ribosomal subunit protein eL18 (188 aa).

Residue Lys-119 forms a Glycyl lysine isopeptide (Lys-Gly) (interchain with G-Cter in SUMO2) linkage. Ser-130 carries the post-translational modification Phosphoserine. The tract at residues 150–188 (RHFGKAPGTPHSHTKPYVRSKGRKFERARGRRASRGYKN) is disordered. Phosphothreonine is present on Thr-158. 2 stretches are compositionally biased toward basic residues: residues 161 to 171 (SHTKPYVRSKG) and 178 to 188 (RGRRASRGYKN). Residue Lys-164 forms a Glycyl lysine isopeptide (Lys-Gly) (interchain with G-Cter in SUMO2) linkage.

This sequence belongs to the eukaryotic ribosomal protein eL18 family. Component of the large ribosomal subunit.

It is found in the cytoplasm. The protein localises to the cytosol. It localises to the rough endoplasmic reticulum. Its function is as follows. Component of the large ribosomal subunit. The ribosome is a large ribonucleoprotein complex responsible for the synthesis of proteins in the cell. In Mus musculus (Mouse), this protein is Large ribosomal subunit protein eL18 (Rpl18).